A 260-amino-acid polypeptide reads, in one-letter code: 5'-nucleotidase SurE (260 aa).

Residues Asp-19, Asp-20, Ser-51, and Asn-104 each coordinate a divalent metal cation.

It belongs to the SurE nucleotidase family. The cofactor is a divalent metal cation.

It localises to the cytoplasm. The catalysed reaction is a ribonucleoside 5'-phosphate + H2O = a ribonucleoside + phosphate. Functionally, nucleotidase that shows phosphatase activity on nucleoside 5'-monophosphates. In Paramagnetospirillum magneticum (strain ATCC 700264 / AMB-1) (Magnetospirillum magneticum), this protein is 5'-nucleotidase SurE.